The sequence spans 381 residues: Cytochrome b (381 aa).

A run of 4 helical transmembrane segments spans residues 32-52 (GGSLAGMMLASQMLTGILLAM), 76-98 (MILRYAHANGASLFFIVVYLHVL), 113-133 (VWISGVVILLVMIITAFIGYV), and 179-199 (FYSFHYTLPFILAGLSVFHIA). Positions 82 and 96 each coordinate heme b. Residues His-183 and His-197 each contribute to the heme b site. His-202 is an a ubiquinone binding site. 4 consecutive transmembrane segments (helical) span residues 225 to 245 (FGAKDLVGALFLALVFSILVF), 289 to 309 (AMGVLAIGLVFASLFAMPFIG), 318 to 338 (ITEWLYWTFLADVLLLTWLGG), and 345 to 365 (TSFVGQCCTAYLFFYLLVCQP).

The protein belongs to the cytochrome b family. In terms of assembly, the main subunits of complex b-c1 are: cytochrome b, cytochrome c1 and the Rieske protein. Heme b is required as a cofactor.

The protein resides in the mitochondrion inner membrane. Functionally, component of the ubiquinol-cytochrome c reductase complex (complex III or cytochrome b-c1 complex) that is part of the mitochondrial respiratory chain. The b-c1 complex mediates electron transfer from ubiquinol to cytochrome c. Contributes to the generation of a proton gradient across the mitochondrial membrane that is then used for ATP synthesis. The chain is Cytochrome b (MT-CYB) from Chlamydomonas reinhardtii (Chlamydomonas smithii).